The sequence spans 876 residues: Monofunctional isopimaradiene synthase, chloroplastic (876 aa).

The N-terminal 64 residues, 1–64, are a transit peptide targeting the chloroplast; that stretch reads MAMPSYSSLS…YLRLGSRKII (64 aa). 5 residues coordinate Mg(2+): D628, D632, N772, T776, and E780. The short motif at 628–632 is the DDXXD motif element; the sequence is DDLYD.

The protein belongs to the terpene synthase family. Tpsd subfamily. Mg(2+) is required as a cofactor.

Its subcellular location is the plastid. The protein localises to the chloroplast. The catalysed reaction is (+)-copalyl diphosphate = isopimara-7,15-diene + diphosphate. It participates in terpene metabolism; oleoresin biosynthesis. Involved in defensive oleoresin formation in conifers in response to insect attack or other injury. Involved in diterpene (C20) olefins biosynthesis. Monofunctional enzyme lacking the DXDD motif in the class II active site relevant for the cyclization of geranylgeranyl diphosphate (GGPP). Requires (+)-copalyl diphosphate ((+)-CPP) as substrate, but no activity with GGPP or ent-CPP. Isopimaradiene is the major products of the enzyme followed by sandaracopimaradiene. This chain is Monofunctional isopimaradiene synthase, chloroplastic, found in Pinus banksiana (Jack pine).